The sequence spans 417 residues: Zinc finger CCCH domain-containing protein ZFN-like (417 aa).

2 consecutive C3H1-type zinc fingers follow at residues 31 to 58 and 75 to 103; these read PGEPDCSYYIRTGLCRFGATCRFNHPPN and RLGQPECQYYLKTGTCKFGATCRFHHPKD. Residues 121–149 form a C3H1-type 3; degenerate zinc finger; the sequence is RPNESERAYYLRTGQCKFGNTCKFHHPQP. 2 C3H1-type zinc fingers span residues 278–306 and 324–352; these read RPDQPECQFYMKTGDCKFGAVCRFHHPRE and RPGEPLCVFYSRYGICKFGPSCKFDHPMG. The segment at 383-417 is disordered; the sequence is SSEGLVESGTAKPRRLSLSETRPIPPGDDNIDDEG.

Its subcellular location is the nucleus. This Pisum sativum (Garden pea) protein is Zinc finger CCCH domain-containing protein ZFN-like.